The primary structure comprises 433 residues: Eukaryotic peptide chain release factor subunit 1 (433 aa).

The residue at position 182 (Gln-182) is an N5-methylglutamine. Ser-425 is modified (phosphoserine).

This sequence belongs to the eukaryotic release factor 1 family. Component of the eRF1-eRF3-GTP ternary complex, composed of sup45/eRF1, sup35/eRF3 and GTP.

The protein localises to the cytoplasm. In terms of biological role, component of the eRF1-eRF3-GTP ternary complex, a ternary complex that mediates translation termination in response to the termination codons. The eRF1-eRF3-GTP complex binds to a stop codon in the ribosomal A-site. Sup45/eRF1 is responsible for stop codon recognition and inducing hydrolysis of peptidyl-tRNA. Following GTP hydrolysis by sup35/eRF3, sup35/eRF3 dissociates, permitting sup45/eRF1 to accommodate fully in the A-site. In Schizosaccharomyces pombe (strain 972 / ATCC 24843) (Fission yeast), this protein is Eukaryotic peptide chain release factor subunit 1 (sup45).